The sequence spans 418 residues: Serine hydroxymethyltransferase (418 aa).

Residues L121 and 125–127 (GHL) each bind (6S)-5,6,7,8-tetrahydrofolate. K230 bears the N6-(pyridoxal phosphate)lysine mark. 355–357 (SPF) serves as a coordination point for (6S)-5,6,7,8-tetrahydrofolate.

The protein belongs to the SHMT family. Homodimer. It depends on pyridoxal 5'-phosphate as a cofactor.

The protein localises to the cytoplasm. It catalyses the reaction (6R)-5,10-methylene-5,6,7,8-tetrahydrofolate + glycine + H2O = (6S)-5,6,7,8-tetrahydrofolate + L-serine. It functions in the pathway one-carbon metabolism; tetrahydrofolate interconversion. Its pathway is amino-acid biosynthesis; glycine biosynthesis; glycine from L-serine: step 1/1. Its function is as follows. Catalyzes the reversible interconversion of serine and glycine with tetrahydrofolate (THF) serving as the one-carbon carrier. This reaction serves as the major source of one-carbon groups required for the biosynthesis of purines, thymidylate, methionine, and other important biomolecules. Also exhibits THF-independent aldolase activity toward beta-hydroxyamino acids, producing glycine and aldehydes, via a retro-aldol mechanism. The chain is Serine hydroxymethyltransferase from Alcanivorax borkumensis (strain ATCC 700651 / DSM 11573 / NCIMB 13689 / SK2).